The sequence spans 146 residues: Hemoglobin subunit beta-2 (146 aa).

Residues 2–146 (EWTDFERATI…VVSSLGRQYH (145 aa)) enclose the Globin domain. Positions 63 and 92 each coordinate heme b.

Belongs to the globin family. As to quaternary structure, hb2 is a heterotetramer of two alpha chains and two beta-2 chains. Red blood cells.

In terms of biological role, involved in oxygen transport from gills to the various peripheral tissues. This chain is Hemoglobin subunit beta-2 (hbb2), found in Pseudaphritis urvillii (Congolli).